The following is a 90-amino-acid chain: Putative membrane protein insertion efficiency factor (90 aa).

It belongs to the UPF0161 family.

The protein resides in the cell membrane. In terms of biological role, could be involved in insertion of integral membrane proteins into the membrane. This is Putative membrane protein insertion efficiency factor from Lactococcus lactis subsp. cremoris (strain MG1363).